The chain runs to 543 residues: Carotenoid 9,10(9',10')-cleavage dioxygenase 1 (543 aa).

Fe cation-binding residues include histidine 224, histidine 272, histidine 338, and histidine 528.

It belongs to the carotenoid oxygenase family. As to quaternary structure, homodimer. It depends on Fe(2+) as a cofactor.

The catalysed reaction is all-trans-zeaxanthin + 2 O2 = 4,9-dimethyldodeca-2,4,6,8,10-pentaenedial + 2 (3R)-hydroxy-beta-ionone. Its function is as follows. Cleaves a variety of carotenoids at the 9-10 and 9'-10' double bonds. Probably not involved in abscisic acid biosynthesis. This chain is Carotenoid 9,10(9',10')-cleavage dioxygenase 1 (CCD1), found in Phaseolus vulgaris (Kidney bean).